We begin with the raw amino-acid sequence, 640 residues long: DNA gyrase subunit B (640 aa).

The Toprim domain maps to 423–537 (AELYIVEGDS…NGNIYIAQPP (115 aa)). Mg(2+) is bound by residues E429, D502, and D504.

The protein belongs to the type II topoisomerase GyrB family. Heterotetramer, composed of two GyrA and two GyrB chains. In the heterotetramer, GyrA contains the active site tyrosine that forms a transient covalent intermediate with DNA, while GyrB binds cofactors and catalyzes ATP hydrolysis. Requires Mg(2+) as cofactor. The cofactor is Mn(2+). It depends on Ca(2+) as a cofactor.

The protein resides in the cytoplasm. The catalysed reaction is ATP-dependent breakage, passage and rejoining of double-stranded DNA.. Its function is as follows. A type II topoisomerase that negatively supercoils closed circular double-stranded (ds) DNA in an ATP-dependent manner to modulate DNA topology and maintain chromosomes in an underwound state. Negative supercoiling favors strand separation, and DNA replication, transcription, recombination and repair, all of which involve strand separation. Also able to catalyze the interconversion of other topological isomers of dsDNA rings, including catenanes and knotted rings. Type II topoisomerases break and join 2 DNA strands simultaneously in an ATP-dependent manner. The chain is DNA gyrase subunit B from Spiroplasma citri.